Here is a 315-residue protein sequence, read N- to C-terminus: 1-aminocyclopropane-1-carboxylate oxidase 1 (315 aa).

Residues Pro-153–Pro-253 form the Fe2OG dioxygenase domain. The Fe cation site is built by His-177, Asp-179, and His-234.

Belongs to the iron/ascorbate-dependent oxidoreductase family. Requires Fe cation as cofactor. As to expression, predominantly expressed in the petals and the stigma and style.

The catalysed reaction is 1-aminocyclopropane-1-carboxylate + L-ascorbate + O2 = ethene + L-dehydroascorbate + hydrogen cyanide + CO2 + 2 H2O. It functions in the pathway alkene biosynthesis; ethylene biosynthesis via S-adenosyl-L-methionine; ethylene from S-adenosyl-L-methionine: step 2/2. The chain is 1-aminocyclopropane-1-carboxylate oxidase 1 (ACO1) from Solanum lycopersicum (Tomato).